The chain runs to 392 residues: WD repeat-containing protein GTS1 (392 aa).

WD repeat units follow at residues 81–124, 128–167, 171–211, and 323–368; these read GHSD…QVSR, GNDQEIFSFSYGGAADNLLAGGCKEQVLLWDWRNSKQVAC, SHMD…NDDD, and GHID…TEIN.

Expressed in germinating seeds, rosettes leaves, flowers and siliques.

Involved in the control of plant growth development. Acts as negative regulator of seed germination, cell division in meristematic regions, plant growth and overall biomass accumulation. May function by regulating ribosome activities and biogenesis in plant cells. In Arabidopsis thaliana (Mouse-ear cress), this protein is WD repeat-containing protein GTS1.